The sequence spans 160 residues: SsrA-binding protein (160 aa).

The protein belongs to the SmpB family.

Its subcellular location is the cytoplasm. Functionally, required for rescue of stalled ribosomes mediated by trans-translation. Binds to transfer-messenger RNA (tmRNA), required for stable association of tmRNA with ribosomes. tmRNA and SmpB together mimic tRNA shape, replacing the anticodon stem-loop with SmpB. tmRNA is encoded by the ssrA gene; the 2 termini fold to resemble tRNA(Ala) and it encodes a 'tag peptide', a short internal open reading frame. During trans-translation Ala-aminoacylated tmRNA acts like a tRNA, entering the A-site of stalled ribosomes, displacing the stalled mRNA. The ribosome then switches to translate the ORF on the tmRNA; the nascent peptide is terminated with the 'tag peptide' encoded by the tmRNA and targeted for degradation. The ribosome is freed to recommence translation, which seems to be the essential function of trans-translation. The polypeptide is SsrA-binding protein (Photorhabdus laumondii subsp. laumondii (strain DSM 15139 / CIP 105565 / TT01) (Photorhabdus luminescens subsp. laumondii)).